A 477-amino-acid polypeptide reads, in one-letter code: Aspartyl/glutamyl-tRNA(Asn/Gln) amidotransferase subunit B (477 aa).

This sequence belongs to the GatB/GatE family. GatB subfamily. In terms of assembly, heterotrimer of A, B and C subunits.

The enzyme catalyses L-glutamyl-tRNA(Gln) + L-glutamine + ATP + H2O = L-glutaminyl-tRNA(Gln) + L-glutamate + ADP + phosphate + H(+). The catalysed reaction is L-aspartyl-tRNA(Asn) + L-glutamine + ATP + H2O = L-asparaginyl-tRNA(Asn) + L-glutamate + ADP + phosphate + 2 H(+). Allows the formation of correctly charged Asn-tRNA(Asn) or Gln-tRNA(Gln) through the transamidation of misacylated Asp-tRNA(Asn) or Glu-tRNA(Gln) in organisms which lack either or both of asparaginyl-tRNA or glutaminyl-tRNA synthetases. The reaction takes place in the presence of glutamine and ATP through an activated phospho-Asp-tRNA(Asn) or phospho-Glu-tRNA(Gln). This is Aspartyl/glutamyl-tRNA(Asn/Gln) amidotransferase subunit B from Legionella pneumophila (strain Corby).